Here is a 243-residue protein sequence, read N- to C-terminus: UPF0246 protein Sez_1855 (243 aa).

Belongs to the UPF0246 family.

The sequence is that of UPF0246 protein Sez_1855 from Streptococcus equi subsp. zooepidemicus (strain MGCS10565).